Reading from the N-terminus, the 535-residue chain is CTP synthase (535 aa).

The segment at 1 to 267 (MTKYIFVTGG…DQIVCDHLKL (267 aa)) is amidoligase domain. A CTP-binding site is contributed by Ser-13. Ser-13 serves as a coordination point for UTP. ATP is bound at residue 14 to 19 (SLGKGI). Tyr-54 is an L-glutamine binding site. Asp-71 contacts ATP. Mg(2+) is bound by residues Asp-71 and Glu-141. CTP is bound by residues 148-150 (DIE), 188-193 (KTKPTQ), and Lys-224. Residues 188 to 193 (KTKPTQ) and Lys-224 contribute to the UTP site. Residues 292-534 (RIALVGKYVE…VQASITNKES (243 aa)) enclose the Glutamine amidotransferase type-1 domain. Position 354 (Gly-354) interacts with L-glutamine. Cys-381 serves as the catalytic Nucleophile; for glutamine hydrolysis. Residues 382-385 (LGMQ), Glu-405, and Arg-462 each bind L-glutamine. Residues His-507 and Glu-509 contribute to the active site.

It belongs to the CTP synthase family. In terms of assembly, homotetramer.

The catalysed reaction is UTP + L-glutamine + ATP + H2O = CTP + L-glutamate + ADP + phosphate + 2 H(+). It carries out the reaction L-glutamine + H2O = L-glutamate + NH4(+). The enzyme catalyses UTP + NH4(+) + ATP = CTP + ADP + phosphate + 2 H(+). The protein operates within pyrimidine metabolism; CTP biosynthesis via de novo pathway; CTP from UDP: step 2/2. Allosterically activated by GTP, when glutamine is the substrate; GTP has no effect on the reaction when ammonia is the substrate. The allosteric effector GTP functions by stabilizing the protein conformation that binds the tetrahedral intermediate(s) formed during glutamine hydrolysis. Inhibited by the product CTP, via allosteric rather than competitive inhibition. Functionally, catalyzes the ATP-dependent amination of UTP to CTP with either L-glutamine or ammonia as the source of nitrogen. Regulates intracellular CTP levels through interactions with the four ribonucleotide triphosphates. In Bacillus cytotoxicus (strain DSM 22905 / CIP 110041 / 391-98 / NVH 391-98), this protein is CTP synthase.